The primary structure comprises 429 residues: Histidine--tRNA ligase (429 aa).

The protein belongs to the class-II aminoacyl-tRNA synthetase family. In terms of assembly, homodimer.

The protein resides in the cytoplasm. The enzyme catalyses tRNA(His) + L-histidine + ATP = L-histidyl-tRNA(His) + AMP + diphosphate + H(+). The protein is Histidine--tRNA ligase of Streptococcus pneumoniae (strain Hungary19A-6).